We begin with the raw amino-acid sequence, 188 residues long: Apolipoprotein M (188 aa).

A signal peptide (not cleaved) is located at residues 1–22 (MFHQIWAALLYLYGILLNSIYQ). 3 disulfide bridges follow: Cys-23–Cys-167, Cys-95–Cys-183, and Cys-128–Cys-157. Tetradecanoate-binding residues include Glu-136 and Arg-143.

The protein belongs to the calycin superfamily. Lipocalin family. Highly divergent. In terms of assembly, interacts with LRP2; LRP2 mediates APOM renal uptake and subsequent lysosomal degradation.

The protein resides in the secreted. Its function is as follows. Probably involved in lipid transport. Can bind sphingosine-1-phosphate, myristic acid, palmitic acid and stearic acid, retinol, all-trans-retinoic acid and 9-cis-retinoic acid. In Sus scrofa (Pig), this protein is Apolipoprotein M (APOM).